The chain runs to 692 residues: DNA ligase (692 aa).

NAD(+)-binding positions include 35–39 (DLVYD), 88–89 (SL), and glutamate 117. Lysine 119 (N6-AMP-lysine intermediate) is an active-site residue. NAD(+) is bound by residues arginine 140, glutamate 176, lysine 301, and lysine 325. Zn(2+) is bound by residues cysteine 416, cysteine 419, cysteine 434, and cysteine 439. A BRCT domain is found at 611-692 (LTNQSNSWAS…FDLIKNSKKT (82 aa)).

Belongs to the NAD-dependent DNA ligase family. LigA subfamily. Mg(2+) serves as cofactor. It depends on Mn(2+) as a cofactor.

The enzyme catalyses NAD(+) + (deoxyribonucleotide)n-3'-hydroxyl + 5'-phospho-(deoxyribonucleotide)m = (deoxyribonucleotide)n+m + AMP + beta-nicotinamide D-nucleotide.. Its function is as follows. DNA ligase that catalyzes the formation of phosphodiester linkages between 5'-phosphoryl and 3'-hydroxyl groups in double-stranded DNA using NAD as a coenzyme and as the energy source for the reaction. It is essential for DNA replication and repair of damaged DNA. The chain is DNA ligase from Mesomycoplasma hyopneumoniae (strain J / ATCC 25934 / NCTC 10110) (Mycoplasma hyopneumoniae).